Here is a 428-residue protein sequence, read N- to C-terminus: Histidine--tRNA ligase (428 aa).

Belongs to the class-II aminoacyl-tRNA synthetase family. In terms of assembly, homodimer.

The protein localises to the cytoplasm. It carries out the reaction tRNA(His) + L-histidine + ATP = L-histidyl-tRNA(His) + AMP + diphosphate + H(+). This Bordetella avium (strain 197N) protein is Histidine--tRNA ligase.